Reading from the N-terminus, the 1098-residue chain is Protein translocase subunit SecA (1098 aa).

Residues Gln176, 194–198 (GEGKT), and Asp696 each bind ATP. The interval 1024–1098 (EPEQVREAAP…KYKNCHGQNA (75 aa)) is disordered. Basic and acidic residues-rich tracts occupy residues 1041–1051 (QYREEKQDLSD) and 1058–1077 (AEHDTREVKREPVRAEKTVG). Positions 1082, 1084, 1093, and 1094 each coordinate Zn(2+).

It belongs to the SecA family. In terms of assembly, monomer and homodimer. Part of the essential Sec protein translocation apparatus which comprises SecA, SecYEG and auxiliary proteins SecDF. Other proteins may also be involved. Zn(2+) serves as cofactor.

Its subcellular location is the cell inner membrane. The protein localises to the cytoplasm. It catalyses the reaction ATP + H2O + cellular proteinSide 1 = ADP + phosphate + cellular proteinSide 2.. Part of the Sec protein translocase complex. Interacts with the SecYEG preprotein conducting channel. Has a central role in coupling the hydrolysis of ATP to the transfer of proteins into and across the cell membrane, serving as an ATP-driven molecular motor driving the stepwise translocation of polypeptide chains across the membrane. This chain is Protein translocase subunit SecA, found in Phocaeicola vulgatus (strain ATCC 8482 / DSM 1447 / JCM 5826 / CCUG 4940 / NBRC 14291 / NCTC 11154) (Bacteroides vulgatus).